The sequence spans 426 residues: MTDSAFTRAARVIPGGVNSPVRAFKSVGGEPIFIARAEGAYLYDVNGRRYIDYVGSYGPMINGHAHPEIVAAVCRASRNGMSYGAPNELETELAEKIVARVPSVEMVRMCNSGTEATMSAIRLARAATNRTQILKFAGCYHGHSDALLVSAGSGALTFGSPNSPGVPEDFVRHTLTAPYNDIAALERIFVQHGKNLAAVIVEPIAGNMNCVPPLPEFLPTLRALTKKYGVILIIDEVMTGFRVAYAGAQGLYDIAADLTTFGKVIGGGMPVGAFAGSADLMSMLSPVGSVYQAGTLSGNPVAMIAGITNLRLTEAEGFYDTLAAKTQKLAEGLRQAAKKNGIHVVVNDVCGMLGLFFTDLPQVCNFADVQTADTARFAKFFHAMLAEGVNLAPSAYETIFVSMAHDDAVLDETIAIAEYVFAHLEE.

The residue at position 263 (Lys-263) is an N6-(pyridoxal phosphate)lysine.

It belongs to the class-III pyridoxal-phosphate-dependent aminotransferase family. HemL subfamily. As to quaternary structure, homodimer. It depends on pyridoxal 5'-phosphate as a cofactor.

It is found in the cytoplasm. It carries out the reaction (S)-4-amino-5-oxopentanoate = 5-aminolevulinate. It participates in porphyrin-containing compound metabolism; protoporphyrin-IX biosynthesis; 5-aminolevulinate from L-glutamyl-tRNA(Glu): step 2/2. The sequence is that of Glutamate-1-semialdehyde 2,1-aminomutase from Dichelobacter nodosus (strain VCS1703A).